A 221-amino-acid chain; its full sequence is Ribosomal RNA small subunit methyltransferase G (221 aa).

Glycine 78, phenylalanine 83, and arginine 150 together coordinate S-adenosyl-L-methionine.

Belongs to the methyltransferase superfamily. RNA methyltransferase RsmG family.

It is found in the cytoplasm. In terms of biological role, specifically methylates the N7 position of a guanine in 16S rRNA. This chain is Ribosomal RNA small subunit methyltransferase G, found in Bifidobacterium longum (strain DJO10A).